Consider the following 254-residue polypeptide: Imidazole glycerol phosphate synthase subunit HisF (254 aa).

Residues aspartate 12 and aspartate 131 contribute to the active site.

The protein belongs to the HisA/HisF family. Heterodimer of HisH and HisF.

The protein resides in the cytoplasm. It carries out the reaction 5-[(5-phospho-1-deoxy-D-ribulos-1-ylimino)methylamino]-1-(5-phospho-beta-D-ribosyl)imidazole-4-carboxamide + L-glutamine = D-erythro-1-(imidazol-4-yl)glycerol 3-phosphate + 5-amino-1-(5-phospho-beta-D-ribosyl)imidazole-4-carboxamide + L-glutamate + H(+). Its pathway is amino-acid biosynthesis; L-histidine biosynthesis; L-histidine from 5-phospho-alpha-D-ribose 1-diphosphate: step 5/9. In terms of biological role, IGPS catalyzes the conversion of PRFAR and glutamine to IGP, AICAR and glutamate. The HisF subunit catalyzes the cyclization activity that produces IGP and AICAR from PRFAR using the ammonia provided by the HisH subunit. This chain is Imidazole glycerol phosphate synthase subunit HisF, found in Leuconostoc mesenteroides subsp. mesenteroides (strain ATCC 8293 / DSM 20343 / BCRC 11652 / CCM 1803 / JCM 6124 / NCDO 523 / NBRC 100496 / NCIMB 8023 / NCTC 12954 / NRRL B-1118 / 37Y).